The primary structure comprises 886 residues: Cytosolic carboxypeptidase-like protein 5 (886 aa).

The Peptidase M14 domain occupies 157-570; sequence YPFSYSDCQD…AMAIAALDMA (414 aa). 2 residues coordinate Zn(2+): H252 and E255. A compositionally biased stretch (polar residues) spans 344–353; that stretch reads AKSPTNQQPT. 2 disordered regions span residues 344 to 363 and 374 to 401; these read AKSP…APLS and EAHL…KTDP. H434 contacts Zn(2+). E516 (proton donor/acceptor) is an active-site residue. 2 disordered regions span residues 602–737 and 783–846; these read GLTS…RNMG and TRLQ…PAFS. Polar residues predominate over residues 621-635; sequence PKSNNSLPVSCSENA. Low complexity predominate over residues 643–654; the sequence is STGTSTGGSSSS. Residues 655–666 show a composition bias toward polar residues; that stretch reads QQNSPQMKNSPS. Residues 714–737 show a composition bias toward low complexity; the sequence is STTSSLAPSPTLASSGPTSSRNMG. The segment covering 805–815 has biased composition (polar residues); sequence SSPTSPIPQTR. The residue at position 841 (S841) is a Phosphoserine.

The protein belongs to the peptidase M14 family. Zn(2+) is required as a cofactor. In terms of tissue distribution, widely expressed. Highly expressed in testis, and moderately in pituitary, brain, eye and kidney.

It localises to the cytoplasm. Its subcellular location is the cytosol. The protein localises to the nucleus. The protein resides in the cytoskeleton. It is found in the spindle. It localises to the midbody. It carries out the reaction gamma-L-glutamyl-L-glutamyl-[protein] + H2O = L-glutamyl-[protein] + L-glutamate. It catalyses the reaction (L-glutamyl)(n+1)-gamma-L-glutamyl-L-glutamyl-[protein] + H2O = (L-glutamyl)(n)-gamma-L-glutamyl-L-glutamyl-[protein] + L-glutamate. The enzyme catalyses C-terminal L-alpha-aminoacyl-L-glutamyl-[tubulin] + H2O = C-terminal L-alpha-aminoacyl-[tubulin] + L-glutamate. The catalysed reaction is C-terminal L-alpha-aminoacyl-L-glutamyl-L-glutamyl-[tubulin] + H2O = C-terminal L-alpha-aminoacyl-L-glutamyl-[tubulin] + L-glutamate. Functionally, metallocarboxypeptidase that mediates deglutamylation of tubulin and non-tubulin target proteins. Catalyzes the removal of polyglutamate side chains present on the gamma-carboxyl group of glutamate residues within the C-terminal tail of alpha- and beta-tubulin. Cleaves alpha- and gamma-linked polyglutamate tubulin side-chain, as well as the branching point glutamate. Also catalyzes the removal of alpha-linked glutamate residues from the carboxy-terminus of alpha-tubulin. Mediates deglutamylation of nucleotidyltransferase CGAS, leading to CGAS antiviral defense response activation. The sequence is that of Cytosolic carboxypeptidase-like protein 5 from Mus musculus (Mouse).